Reading from the N-terminus, the 375-residue chain is Growth/differentiation factor 8 (375 aa).

Residues Met-1–Ala-18 form the signal peptide. Residues Gly-19–Arg-266 constitute a propeptide that is removed on maturation. N-linked (GlcNAc...) asparagine glycosylation is found at Asn-48 and Asn-71. 4 disulfides stabilise this stretch: Cys-272/Cys-282, Cys-281/Cys-340, Cys-309/Cys-372, and Cys-313/Cys-374.

This sequence belongs to the TGF-beta family. Homodimer; disulfide-linked. Interacts with WFIKKN2, leading to inhibit its activity. Interacts with FSTL3. In terms of processing, synthesized as large precursor molecule that undergoes proteolytic cleavage to generate an N-terminal propeptide and a disulfide linked C-terminal dimer, which is the biologically active molecule. The circulating form consists of a latent complex of the C-terminal dimer and other proteins, including its propeptide, which maintain the C-terminal dimer in a latent, inactive state. Ligand activation requires additional cleavage of the prodomain by a tolloid-like metalloproteinase.

It localises to the secreted. Acts specifically as a negative regulator of skeletal muscle growth. The protein is Growth/differentiation factor 8 (MSTN) of Sylvicapra grimmia (Grey duiker).